The chain runs to 144 residues: Large ribosomal subunit protein uL16 (144 aa).

Positions 1–14 (MLMPKRVKYRKPHR) are enriched in basic residues. A disordered region spans residues 1–25 (MLMPKRVKYRKPHRPGTQGKATRGN).

Belongs to the universal ribosomal protein uL16 family. As to quaternary structure, part of the 50S ribosomal subunit.

Functionally, binds 23S rRNA and is also seen to make contacts with the A and possibly P site tRNAs. The chain is Large ribosomal subunit protein uL16 from Moorella thermoacetica (strain ATCC 39073 / JCM 9320).